The sequence spans 149 residues: Nucleoside diphosphate kinase (149 aa).

Positions 9, 57, 85, 91, 102, and 112 each coordinate ATP. Residue histidine 115 is the Pros-phosphohistidine intermediate of the active site.

It belongs to the NDK family. Homotetramer. It depends on Mg(2+) as a cofactor.

It is found in the cytoplasm. The catalysed reaction is dZDP + ATP = dZTP + ADP. It carries out the reaction a 2'-deoxyribonucleoside 5'-diphosphate + ATP = a 2'-deoxyribonucleoside 5'-triphosphate + ADP. The enzyme catalyses a ribonucleoside 5'-diphosphate + ATP = a ribonucleoside 5'-triphosphate + ADP. Its pathway is purine metabolism. In terms of biological role, major role in the synthesis of nucleoside triphosphates other than ATP. The ATP gamma phosphate is transferred to the NDP beta phosphate via a ping-pong mechanism, using a phosphorylated active-site intermediate. Its function is as follows. (Microbial infection) Catalyzes the phosphorylation of dZDP to dZTP, when the bacterium is infected by a phage that produces the substrate for the synthesis of dZTP (2- amino-2'-deoxyadenosine 5'-triphosphate), which is then used by the phage as a DNA polymerase substrate. The protein is Nucleoside diphosphate kinase of Picosynechococcus sp. (strain ATCC 27264 / PCC 7002 / PR-6) (Agmenellum quadruplicatum).